A 406-amino-acid chain; its full sequence is MLSPAPEEPLLLAELKPGRPHQFDWKSSCETWSVAFSPDGSWFAWSQGHCIVKLIPWPLEEQFIPKGFEAKSRSSKNETKGRGSPKEKTLDCGQIVWGLAFSPWPSPPSKKLWARHHPQVPDVSCLILATGLNDGQIKIWEVQTGLLLLNLSGHQDVVRDLSFTPSGSLILVSASRDKTLRIWDLNKHGKQIQVLSGHLQWVYCCSISPDCSMLCSAAGEKSVFLWSMRSYTLIRKLEGHQSSVVSCDFSPDSALLVTASYDTNVIMWDPYTGERLRSLHHTQLNPPMDDSDVHISSLRSVCFSPEGLYLATVADDRLLRIWALELKTPIAFAPMTNGLCCTFFPHGGVIATGTRDGHVQFWTAPRVLSSLKHLCRKALRSFLTTYQVLALPIPKKMKEFLTYRTF.

Residues 70–89 (AKSRSSKNETKGRGSPKEKT) are disordered. WD repeat units lie at residues 107–150 (PPSK…LLLN), 153–193 (GHQD…KQIQ), 197–236 (GHLQ…LIRK), 239–278 (GHQS…RLRS), and 293–332 (VHIS…PIAF). The SOCS box domain maps to 358-406 (HVQFWTAPRVLSSLKHLCRKALRSFLTTYQVLALPIPKKMKEFLTYRTF).

The protein operates within protein modification; protein ubiquitination. May be a substrate-recognition component of a SCF-like ECS (Elongin-Cullin-SOCS-box protein) E3 ubiquitin ligase complex which mediates the ubiquitination and subsequent proteasomal degradation of target proteins. This Bos taurus (Bovine) protein is WD repeat and SOCS box-containing protein 2 (WSB2).